Consider the following 312-residue polypeptide: Triacylglycerol lipase (312 aa).

The N-terminal stretch at 1-25 is a signal peptide; it reads MNKIIILIALSLFSSSIWAGTSAHA. Residues 37–228 form the AB hydrolase-1 domain; sequence PIVLVHGLFG…VNGVRYYSWS (192 aa). Leucine 44 serves as a coordination point for substrate. Catalysis depends on serine 110, which acts as the Nucleophile. Histidine 111 contributes to the substrate binding site. Cysteine 212 and cysteine 262 form a disulfide bridge. Position 238 (aspartate 238) interacts with Ca(2+). Active-site charge relay system residues include aspartate 256 and histidine 278. Ca(2+) is bound by residues aspartate 280, glycine 284, and isoleucine 288.

Belongs to the AB hydrolase superfamily. Pseudomonas lipase family. As to quaternary structure, monomer. The cofactor is Ca(2+).

Its subcellular location is the secreted. The catalysed reaction is a triacylglycerol + H2O = a diacylglycerol + a fatty acid + H(+). In terms of biological role, catalyzes the hydrolysis of triacylglycerol. The chain is Triacylglycerol lipase from Vibrio cholerae serotype O1 (strain ATCC 39315 / El Tor Inaba N16961).